Here is a 189-residue protein sequence, read N- to C-terminus: ATP synthase subunit delta (189 aa).

The protein belongs to the ATPase delta chain family. As to quaternary structure, F-type ATPases have 2 components, F(1) - the catalytic core - and F(0) - the membrane proton channel. F(1) has five subunits: alpha(3), beta(3), gamma(1), delta(1), epsilon(1). F(0) has three main subunits: a(1), b(2) and c(10-14). The alpha and beta chains form an alternating ring which encloses part of the gamma chain. F(1) is attached to F(0) by a central stalk formed by the gamma and epsilon chains, while a peripheral stalk is formed by the delta and b chains.

It is found in the cell inner membrane. Its function is as follows. F(1)F(0) ATP synthase produces ATP from ADP in the presence of a proton or sodium gradient. F-type ATPases consist of two structural domains, F(1) containing the extramembraneous catalytic core and F(0) containing the membrane proton channel, linked together by a central stalk and a peripheral stalk. During catalysis, ATP synthesis in the catalytic domain of F(1) is coupled via a rotary mechanism of the central stalk subunits to proton translocation. This protein is part of the stalk that links CF(0) to CF(1). It either transmits conformational changes from CF(0) to CF(1) or is implicated in proton conduction. This Rickettsia bellii (strain OSU 85-389) protein is ATP synthase subunit delta.